The primary structure comprises 396 residues: 1-deoxy-D-xylulose 5-phosphate reductoisomerase (396 aa).

Residues Thr-13, Gly-14, Ser-15, Ile-16, and Asn-127 each coordinate NADPH. Lys-128 lines the 1-deoxy-D-xylulose 5-phosphate pocket. NADPH is bound at residue Glu-129. Position 153 (Asp-153) interacts with Mn(2+). Residues Ser-154, Glu-155, Ser-184, and His-207 each contribute to the 1-deoxy-D-xylulose 5-phosphate site. Residue Glu-155 coordinates Mn(2+). Position 213 (Gly-213) interacts with NADPH. 1-deoxy-D-xylulose 5-phosphate is bound by residues Ser-220, Asn-225, Lys-226, and Glu-229. Glu-229 lines the Mn(2+) pocket.

The protein belongs to the DXR family. Requires Mg(2+) as cofactor. Mn(2+) is required as a cofactor.

It catalyses the reaction 2-C-methyl-D-erythritol 4-phosphate + NADP(+) = 1-deoxy-D-xylulose 5-phosphate + NADPH + H(+). The protein operates within isoprenoid biosynthesis; isopentenyl diphosphate biosynthesis via DXP pathway; isopentenyl diphosphate from 1-deoxy-D-xylulose 5-phosphate: step 1/6. Catalyzes the NADPH-dependent rearrangement and reduction of 1-deoxy-D-xylulose-5-phosphate (DXP) to 2-C-methyl-D-erythritol 4-phosphate (MEP). In Pseudomonas paraeruginosa (strain DSM 24068 / PA7) (Pseudomonas aeruginosa (strain PA7)), this protein is 1-deoxy-D-xylulose 5-phosphate reductoisomerase.